The following is a 269-amino-acid chain: Small ribosomal subunit protein uS2 (269 aa).

The disordered stretch occupies residues 228-269 (ARAERQAAAAKDAAGDTGKSEADAEAVKAEAAAEEKAETTEA). The segment covering 233-244 (QAAAAKDAAGDT) has biased composition (low complexity). Basic and acidic residues predominate over residues 245 to 269 (GKSEADAEAVKAEAAAEEKAETTEA).

This sequence belongs to the universal ribosomal protein uS2 family.

The protein is Small ribosomal subunit protein uS2 of Corynebacterium urealyticum (strain ATCC 43042 / DSM 7109).